Reading from the N-terminus, the 148-residue chain is Globin, monomeric component M-IV (148 aa).

Residues 2–147 (GLSAAQRQVV…ISGALISGLQ (146 aa)) enclose the Globin domain. Residue histidine 91 participates in heme b binding.

In terms of assembly, monomer.

The chain is Globin, monomeric component M-IV from Glycera dibranchiata (Bloodworm).